Reading from the N-terminus, the 1350-residue chain is Nidogen (1350 aa).

The N-terminal stretch at 1–22 is a signal peptide; that stretch reads MPTFGSKLLACLLLSSVILVSG. Positions 107 to 260 constitute an NIDO domain; the sequence is AFYSNVDTSF…GVWLFEVAPI (154 aa). Residue Asn231 is glycosylated (N-linked (GlcNAc...) asparagine). The EGF-like 1 domain occupies 281–321; that stretch reads LALSCQAHAHQCHEKAECHDKAEGYCCVCGSGFYGNGKSCL. Intrachain disulfides connect Cys285–Cys298, Cys292–Cys307, and Cys309–Cys320. Positions 325-550 constitute a Nidogen G2 beta-barrel domain; sequence QPIRVTGTLT…GVTPESNACN (226 aa). 2 N-linked (GlcNAc...) asparagine glycosylation sites follow: Asn423 and Asn480. The region spanning 545–583 is the EGF-like 2 domain; the sequence is ESNACNDGTADCVENSVCVPYEDTYRCDCYHGFAAQLDE. Disulfide bonds link Cys549–Cys562, Cys556–Cys571, Cys595–Cys608, Cys602–Cys617, and Cys619–Cys630. Residues 591 to 631 form the EGF-like 3; calcium-binding domain; that stretch reads DIDECATGSHVCDENAVCDNTEGGFNCYCTEGFEGNGYRCL. Asn633 carries N-linked (GlcNAc...) asparagine glycosylation. The segment at 645–691 is disordered; it reads VEGQAEPTSEPSPNPSPYPDQGQDQEREREDDQYPQPNPYPYPEEQI. EGF-like domains lie at 788–829, 832–874, 912–953, 955–996, and 997–1037; these read DLIP…YNCD, SDDS…FNCQ, PAGR…TGCT, KPLS…YVCI, and EEQN…SLCQ. 15 cysteine pairs are disulfide-bonded: Cys792–Cys804, Cys798–Cys815, Cys817–Cys828, Cys836–Cys849, Cys843–Cys860, Cys862–Cys873, Cys916–Cys927, Cys921–Cys938, Cys940–Cys952, Cys959–Cys971, Cys965–Cys982, Cys984–Cys995, Cys1001–Cys1014, Cys1008–Cys1023, and Cys1025–Cys1036. The N-linked (GlcNAc...) asparagine glycan is linked to Asn801. An N-linked (GlcNAc...) asparagine glycan is attached at Asn1032. 4 LDL-receptor class B repeats span residues 1084–1126, 1127–1170, 1171–1216, and 1257–1282; these read GRVY…DVIS, RRLY…DPYR, EKLF…LENS, and DQFY…QTPI.

As to expression, expressed in the basement membrane around the follicular epithelium of the adult ovary (at protein level).

The protein resides in the secreted. It is found in the extracellular space. Its subcellular location is the extracellular matrix. It localises to the basement membrane. Cell adhesion glycoprotein which is widely distributed in basement membranes. Involved in cell-extracellular matrix (ECM) interactions probably by connecting the laminin and collagen IV networks. Required for permeability and mechanical stability of basement membranes, and ECM dependent neural plasticity. Not involved in assembly of the embryonic basement membrane. The protein is Nidogen of Drosophila melanogaster (Fruit fly).